Here is a 421-residue protein sequence, read N- to C-terminus: MIALFRRSCGVLRSLSHFDWRSQHTKTALQREPGSGFSFEFTEQQKEFQATARKFAREEIIPLAAEYDKTGEYPVPLIKRAWELGLMNTHIPESCGGLGLGTFDSCLISEELAYGCTGVQTAIEANSLGQMPVIIAGNDQQQKKYLGRMTEEPLMCAYCVTEPVAGSDVAGIKTKAEKKGDEYIINGQKMWITNGGKANWYFLLARSDPDPKAPASKAFTGFIVEADTPGVQIGRKELNMGQRCSDTRGIVFEDVRVPKENVLIGEGAGFKIAMGAFDKTRPPVAAAAVGLAQRALDEATKYALERKTFGKLLIEHQGISFLLAEMAMKVELARLSYQRAAWEVDSGRRNTYYASIAKAYAGDIANQLASDAVQIFGGNGFNTEYPVEKLMRDAKIYQIYEGTAQIQRLIIAREHIGRYKK.

A mitochondrion-targeting transit peptide spans 1–25 (MIALFRRSCGVLRSLSHFDWRSQHT). An N6-acetyllysine; alternate modification is found at K69. N6-succinyllysine; alternate is present on K69. K79 carries the post-translational modification N6-acetyllysine. FAD is bound at residue 158 to 167 (YCVTEPVAGS). Residue S167 participates in octanoyl-CoA binding. K179 carries the post-translational modification N6-succinyllysine. Residue 191-193 (WIT) participates in FAD binding. An N6-acetyllysine; alternate modification is found at K212. K212 is subject to N6-succinyllysine; alternate. Residue S216 coordinates octanoyl-CoA. N6-acetyllysine; alternate is present on residues K217, K259, and K271. N6-succinyllysine; alternate occurs at positions 217, 259, and 271. D278 is an octanoyl-CoA binding site. K279 is subject to N6-acetyllysine. R281 serves as a coordination point for octanoyl-CoA. K301 is subject to N6-acetyllysine. Residues 306-308 (RKT) and 316-317 (HQ) contribute to the FAD site. The octanoyl-CoA site is built by R349 and T351. T351 is subject to Phosphothreonine. 374–378 (QIFGG) is an FAD binding site. E401 lines the octanoyl-CoA pocket. Catalysis depends on E401, which acts as the Proton acceptor. 402 to 405 (GTAQ) lines the FAD pocket.

The protein belongs to the acyl-CoA dehydrogenase family. Homotetramer. Interacts with the heterodimeric electron transfer flavoprotein ETF. FAD is required as a cofactor. Post-translationally, acetylated. Could occur at proximity of the cofactor-binding sites and reduce the catalytic activity. Could be deacetylated by SIRT3.

It localises to the mitochondrion matrix. The enzyme catalyses a medium-chain 2,3-saturated fatty acyl-CoA + oxidized [electron-transfer flavoprotein] + H(+) = a medium-chain (2E)-enoyl-CoA + reduced [electron-transfer flavoprotein]. It carries out the reaction pentanoyl-CoA + oxidized [electron-transfer flavoprotein] + H(+) = (2E)-pentenoyl-CoA + reduced [electron-transfer flavoprotein]. The catalysed reaction is hexanoyl-CoA + oxidized [electron-transfer flavoprotein] + H(+) = (2E)-hexenoyl-CoA + reduced [electron-transfer flavoprotein]. It catalyses the reaction octanoyl-CoA + oxidized [electron-transfer flavoprotein] + H(+) = (2E)-octenoyl-CoA + reduced [electron-transfer flavoprotein]. The enzyme catalyses decanoyl-CoA + oxidized [electron-transfer flavoprotein] + H(+) = (2E)-decenoyl-CoA + reduced [electron-transfer flavoprotein]. It carries out the reaction dodecanoyl-CoA + oxidized [electron-transfer flavoprotein] + H(+) = (2E)-dodecenoyl-CoA + reduced [electron-transfer flavoprotein]. The catalysed reaction is tetradecanoyl-CoA + oxidized [electron-transfer flavoprotein] + H(+) = (2E)-tetradecenoyl-CoA + reduced [electron-transfer flavoprotein]. It catalyses the reaction oxidized [electron-transfer flavoprotein] + hexadecanoyl-CoA + H(+) = (2E)-hexadecenoyl-CoA + reduced [electron-transfer flavoprotein]. Its pathway is lipid metabolism; mitochondrial fatty acid beta-oxidation. In terms of biological role, medium-chain specific acyl-CoA dehydrogenase is one of the acyl-CoA dehydrogenases that catalyze the first step of mitochondrial fatty acid beta-oxidation, an aerobic process breaking down fatty acids into acetyl-CoA and allowing the production of energy from fats. The first step of fatty acid beta-oxidation consists in the removal of one hydrogen from C-2 and C-3 of the straight-chain fatty acyl-CoA thioester, resulting in the formation of trans-2-enoyl-CoA. Electron transfer flavoprotein (ETF) is the electron acceptor that transfers electrons to the main mitochondrial respiratory chain via ETF-ubiquinone oxidoreductase (ETF dehydrogenase). Among the different mitochondrial acyl-CoA dehydrogenases, medium-chain specific acyl-CoA dehydrogenase acts specifically on acyl-CoAs with saturated 6 to 12 carbons long primary chains. The sequence is that of Medium-chain specific acyl-CoA dehydrogenase, mitochondrial from Bos taurus (Bovine).